The primary structure comprises 223 residues: Putative synaptogyrin-2 like protein (223 aa).

N-acetylmethionine is present on Met1. Ser3 bears the Phosphoserine mark. Residues 20–170 (FLTQPQVVAR…LASLTYQRYK (151 aa)) form the MARVEL domain. Helical transmembrane passes span 26–46 (VVAR…IYGE), 71–91 (GSAI…DAYF), 104–124 (VIGD…GFCF), and 146–166 (AAIT…SLTY). A disordered region spans residues 197-223 (ASVDNYQQPPFTQNAETTEGYQPPPVY). Positions 200–216 (DNYQQPPFTQNAETTEG) are enriched in polar residues.

The protein belongs to the synaptogyrin family.

It localises to the membrane. The protein is Putative synaptogyrin-2 like protein of Homo sapiens (Human).